The following is a 406-amino-acid chain: RILP-like protein 1 (406 aa).

Serine 7 carries the post-translational modification Phosphoserine. One can recognise an RH1 domain in the interval 10–97; it reads AALSALEKNV…RVERMDRIEK (88 aa). Cysteine 47 carries the post-translational modification S-nitrosocysteine. Residues 76-258 adopt a coiled-coil conformation; sequence ELDELRLELD…KLRERLQGEH (183 aa). 2 disordered regions span residues 255 to 280 and 330 to 354; these read QGEH…ESIS and EIEE…QPES. Serine 259 is subject to Phosphoserine. Positions 262-280 are enriched in acidic residues; that stretch reads GEEEEAEIQPQPDGEESIS. Residues 294–359 enclose the RH2 domain; the sequence is RPRFTLQELR…PQPESGIKRL (66 aa).

This sequence belongs to the RILPL family. As to quaternary structure, interacts (when S-nitrosylated) with GAPDH. Interacts with RAB8A; interaction is dependent on the phosphorylation of 'Thr-72' of RAB8A. Interacts with RAB10 and RAB12; the interaction is dependent on the phosphorylation of 'Thr-73' of RAB10, and 'Ser-105' of RAB12. S-nitrosylation is required for the interaction with GAPDH.

It is found in the cytoplasm. Its subcellular location is the cytosol. The protein resides in the cell projection. It localises to the cilium. The protein localises to the cytoskeleton. It is found in the microtubule organizing center. Its subcellular location is the centrosome. The protein resides in the centriole. In terms of biological role, neuroprotective protein, which acts by sequestring GAPDH in the cytosol and prevent the apoptotic function of GAPDH in the nucleus. Competes with SIAH1 for binding GAPDH. Does not regulate lysosomal morphology and distribution. Plays a role in the regulation of cell shape and polarity. Plays a role in cellular protein transport, including protein transport away from primary cilia. Binds to RAB10 following LRRK2-mediated RAB10 phosphorylation which leads to inhibition of ciliogenesis. This is RILP-like protein 1 (Rilpl1) from Mus musculus (Mouse).